Here is a 640-residue protein sequence, read N- to C-terminus: Threonine--tRNA ligase (640 aa).

Residues 1-61 enclose the TGS domain; that stretch reads MPIITLPDGS…ERDATLQIIT (61 aa). The interval 242–533 is catalytic; it reads DHRRIGKQLD…LIEHYAGAFP (292 aa). Positions 333, 384, and 510 each coordinate Zn(2+).

This sequence belongs to the class-II aminoacyl-tRNA synthetase family. In terms of assembly, homodimer. Zn(2+) is required as a cofactor.

It localises to the cytoplasm. It carries out the reaction tRNA(Thr) + L-threonine + ATP = L-threonyl-tRNA(Thr) + AMP + diphosphate + H(+). Functionally, catalyzes the attachment of threonine to tRNA(Thr) in a two-step reaction: L-threonine is first activated by ATP to form Thr-AMP and then transferred to the acceptor end of tRNA(Thr). Also edits incorrectly charged L-seryl-tRNA(Thr). The protein is Threonine--tRNA ligase of Pseudomonas paraeruginosa (strain DSM 24068 / PA7) (Pseudomonas aeruginosa (strain PA7)).